The following is a 149-amino-acid chain: MADQLTEDQISEFKEAFSLFDKDGDGCITTKELGTVMRSLGQNPTEAELQDMINEVDADGNGTIDFPEFLNLMARKMKDTDSEEELKEAFRVFDKDQNGFISAAELRHVMTNLGEKLTDEEVDEMIREADVDGDGQINYDEFVKVMMAK.

Residue alanine 2 is modified to N-acetylalanine. 4 consecutive EF-hand domains span residues 8-43 (DQIS…LGQN), 44-79 (PTEA…KMKD), 81-116 (DSEE…LGEK), and 117-149 (LTDE…MMAK). The Ca(2+) site is built by aspartate 21, aspartate 23, aspartate 25, cysteine 27, glutamate 32, aspartate 57, aspartate 59, asparagine 61, threonine 63, glutamate 68, aspartate 94, aspartate 96, asparagine 98, and glutamate 105. Residue lysine 116 is modified to N6,N6,N6-trimethyllysine. Positions 130, 132, 134, 136, and 141 each coordinate Ca(2+).

The protein belongs to the calmodulin family. As to expression, high expression of PCM5 and 8 in stolon tips and stems, moderate in roots, and low in leaves. Steady-state expression of PCM6 in all the tissues tested, except in the leaves where the expression is lower.

Its function is as follows. Calmodulin mediates the control of a large number of enzymes, ion channels and other proteins by Ca(2+). Among the enzymes to be stimulated by the calmodulin-Ca(2+) complex are a number of protein kinases and phosphatases. The chain is Calmodulin-5/6/7/8 (PCM5) from Solanum tuberosum (Potato).